A 295-amino-acid polypeptide reads, in one-letter code: Transcription factor bHLH19 (295 aa).

The region spanning 115–164 (VLAKEHVLAERKRREKLSEKFIALSALLPGLKKADKVTILDDAISRMKQL) is the bHLH domain.

As to quaternary structure, homodimer. As to expression, expressed in roots and leaves.

It is found in the nucleus. This Arabidopsis thaliana (Mouse-ear cress) protein is Transcription factor bHLH19 (BHLH19).